Here is a 302-residue protein sequence, read N- to C-terminus: NAD kinase 2 (302 aa).

Asp78 (proton acceptor) is an active-site residue. Residues 78-79 (DG), 152-153 (NE), Asp182, 193-198 (TAYALS), and Ala217 contribute to the NAD(+) site.

This sequence belongs to the NAD kinase family. The cofactor is a divalent metal cation.

It localises to the cytoplasm. It carries out the reaction NAD(+) + ATP = ADP + NADP(+) + H(+). In terms of biological role, involved in the regulation of the intracellular balance of NAD and NADP, and is a key enzyme in the biosynthesis of NADP. Catalyzes specifically the phosphorylation on 2'-hydroxyl of the adenosine moiety of NAD to yield NADP. This chain is NAD kinase 2, found in Parasynechococcus marenigrum (strain WH8102).